The primary structure comprises 120 residues: Ribonuclease P protein component (120 aa).

It belongs to the RnpA family. As to quaternary structure, consists of a catalytic RNA component (M1 or rnpB) and a protein subunit.

The enzyme catalyses Endonucleolytic cleavage of RNA, removing 5'-extranucleotides from tRNA precursor.. Functionally, RNaseP catalyzes the removal of the 5'-leader sequence from pre-tRNA to produce the mature 5'-terminus. It can also cleave other RNA substrates such as 4.5S RNA. The protein component plays an auxiliary but essential role in vivo by binding to the 5'-leader sequence and broadening the substrate specificity of the ribozyme. This chain is Ribonuclease P protein component, found in Chlamydia trachomatis serovar A (strain ATCC VR-571B / DSM 19440 / HAR-13).